We begin with the raw amino-acid sequence, 239 residues long: Ribosomal RNA small subunit methyltransferase G (239 aa).

S-adenosyl-L-methionine is bound by residues Gly77, Phe82, Ala128 to Glu129, and Arg147. A disordered region spans residues Arg219–Lys239.

It belongs to the methyltransferase superfamily. RNA methyltransferase RsmG family.

Its subcellular location is the cytoplasm. In terms of biological role, specifically methylates the N7 position of guanine in position 535 of 16S rRNA. This chain is Ribosomal RNA small subunit methyltransferase G, found in Bacillus cytotoxicus (strain DSM 22905 / CIP 110041 / 391-98 / NVH 391-98).